The sequence spans 224 residues: Putative adhesin A1E_05320 (224 aa).

The N-terminal stretch at 1-22 (MKKLLLIAATSATMLSSTLSFA) is a signal peptide.

This is Putative adhesin A1E_05320 from Rickettsia canadensis (strain McKiel).